A 455-amino-acid polypeptide reads, in one-letter code: Bifunctional protein GlmU (455 aa).

The segment at 1-228 (MTQPLHVIIL…AQEAEGANDP (228 aa)) is pyrophosphorylase. Residues 10 to 13 (LAAG), K24, Q76, 81 to 82 (GT), 103 to 105 (YGD), G138, E153, N168, and N226 contribute to the UDP-N-acetyl-alpha-D-glucosamine site. D105 is a binding site for Mg(2+). A Mg(2+)-binding site is contributed by N226. Positions 229–249 (WQLSQLERAWQRRAVRALCAQ) are linker. Residues 250–455 (GARVRDPARL…DGWKRPLKKS (206 aa)) are N-acetyltransferase. UDP-N-acetyl-alpha-D-glucosamine-binding residues include R332 and K350. H362 serves as the catalytic Proton acceptor. UDP-N-acetyl-alpha-D-glucosamine-binding residues include Y365 and N376. Acetyl-CoA contacts are provided by residues A379, 385-386 (NY), S404, A422, and R439.

It in the N-terminal section; belongs to the N-acetylglucosamine-1-phosphate uridyltransferase family. In the C-terminal section; belongs to the transferase hexapeptide repeat family. Homotrimer. Mg(2+) serves as cofactor.

It is found in the cytoplasm. It carries out the reaction alpha-D-glucosamine 1-phosphate + acetyl-CoA = N-acetyl-alpha-D-glucosamine 1-phosphate + CoA + H(+). The enzyme catalyses N-acetyl-alpha-D-glucosamine 1-phosphate + UTP + H(+) = UDP-N-acetyl-alpha-D-glucosamine + diphosphate. Its pathway is nucleotide-sugar biosynthesis; UDP-N-acetyl-alpha-D-glucosamine biosynthesis; N-acetyl-alpha-D-glucosamine 1-phosphate from alpha-D-glucosamine 6-phosphate (route II): step 2/2. It participates in nucleotide-sugar biosynthesis; UDP-N-acetyl-alpha-D-glucosamine biosynthesis; UDP-N-acetyl-alpha-D-glucosamine from N-acetyl-alpha-D-glucosamine 1-phosphate: step 1/1. It functions in the pathway bacterial outer membrane biogenesis; LPS lipid A biosynthesis. Functionally, catalyzes the last two sequential reactions in the de novo biosynthetic pathway for UDP-N-acetylglucosamine (UDP-GlcNAc). The C-terminal domain catalyzes the transfer of acetyl group from acetyl coenzyme A to glucosamine-1-phosphate (GlcN-1-P) to produce N-acetylglucosamine-1-phosphate (GlcNAc-1-P), which is converted into UDP-GlcNAc by the transfer of uridine 5-monophosphate (from uridine 5-triphosphate), a reaction catalyzed by the N-terminal domain. The protein is Bifunctional protein GlmU of Stenotrophomonas maltophilia (strain R551-3).